The following is a 364-amino-acid chain: Anthranilate phosphoribosyltransferase 1 (364 aa).

Residues G102, 105–106, T110, 112–115, 130–138, and S142 each bind 5-phospho-alpha-D-ribose 1-diphosphate; these read GD, NIST, and KHGNRSASS. G102 is a binding site for anthranilate. Mg(2+) is bound at residue S114. Residue N133 coordinates anthranilate. Position 188 (R188) interacts with anthranilate. The Mg(2+) site is built by D247 and E248.

Belongs to the anthranilate phosphoribosyltransferase family. In terms of assembly, homodimer. Mg(2+) serves as cofactor.

The catalysed reaction is N-(5-phospho-beta-D-ribosyl)anthranilate + diphosphate = 5-phospho-alpha-D-ribose 1-diphosphate + anthranilate. It participates in amino-acid biosynthesis; L-tryptophan biosynthesis; L-tryptophan from chorismate: step 2/5. Its function is as follows. Catalyzes the transfer of the phosphoribosyl group of 5-phosphorylribose-1-pyrophosphate (PRPP) to anthranilate to yield N-(5'-phosphoribosyl)-anthranilate (PRA). This Nostoc sp. (strain PCC 7120 / SAG 25.82 / UTEX 2576) protein is Anthranilate phosphoribosyltransferase 1.